Reading from the N-terminus, the 273-residue chain is Rho GTPase-activating protein gacB (273 aa).

The 192-residue stretch at 1 to 192 folds into the Rho-GAP domain; the sequence is MTDQTLRLEN…YLISHFNEIF (192 aa).

Its subcellular location is the cytoplasm. Functionally, rho GTPase-activating protein involved in the signal transduction pathway. The polypeptide is Rho GTPase-activating protein gacB (gacB) (Dictyostelium discoideum (Social amoeba)).